The following is a 282-amino-acid chain: Phosphatidylserine decarboxylase proenzyme (282 aa).

Catalysis depends on charge relay system; for autoendoproteolytic cleavage activity residues Asp88, His144, and Ser247. Ser247 acts as the Schiff-base intermediate with substrate; via pyruvic acid; for decarboxylase activity in catalysis. Pyruvic acid (Ser); by autocatalysis is present on Ser247.

Belongs to the phosphatidylserine decarboxylase family. PSD-B subfamily. Prokaryotic type I sub-subfamily. In terms of assembly, heterodimer of a large membrane-associated beta subunit and a small pyruvoyl-containing alpha subunit. It depends on pyruvate as a cofactor. In terms of processing, is synthesized initially as an inactive proenzyme. Formation of the active enzyme involves a self-maturation process in which the active site pyruvoyl group is generated from an internal serine residue via an autocatalytic post-translational modification. Two non-identical subunits are generated from the proenzyme in this reaction, and the pyruvate is formed at the N-terminus of the alpha chain, which is derived from the carboxyl end of the proenzyme. The autoendoproteolytic cleavage occurs by a canonical serine protease mechanism, in which the side chain hydroxyl group of the serine supplies its oxygen atom to form the C-terminus of the beta chain, while the remainder of the serine residue undergoes an oxidative deamination to produce ammonia and the pyruvoyl prosthetic group on the alpha chain. During this reaction, the Ser that is part of the protease active site of the proenzyme becomes the pyruvoyl prosthetic group, which constitutes an essential element of the active site of the mature decarboxylase.

The protein localises to the cell membrane. The enzyme catalyses a 1,2-diacyl-sn-glycero-3-phospho-L-serine + H(+) = a 1,2-diacyl-sn-glycero-3-phosphoethanolamine + CO2. It participates in phospholipid metabolism; phosphatidylethanolamine biosynthesis; phosphatidylethanolamine from CDP-diacylglycerol: step 2/2. Functionally, catalyzes the formation of phosphatidylethanolamine (PtdEtn) from phosphatidylserine (PtdSer). This chain is Phosphatidylserine decarboxylase proenzyme, found in Xanthomonas oryzae pv. oryzae (strain KACC10331 / KXO85).